Consider the following 137-residue polypeptide: Hydrogenase maturation factor HypA (137 aa).

A Ni(2+)-binding site is contributed by histidine 2. Zn(2+) is bound by residues cysteine 73, cysteine 75, cysteine 105, and cysteine 108.

The protein belongs to the HypA/HybF family.

Functionally, involved in the maturation of [NiFe] hydrogenases. Required for nickel insertion into the metal center of the hydrogenase. The sequence is that of Hydrogenase maturation factor HypA from Methanosarcina mazei (strain ATCC BAA-159 / DSM 3647 / Goe1 / Go1 / JCM 11833 / OCM 88) (Methanosarcina frisia).